The chain runs to 404 residues: MSPSDVPINWKRNLTVTWLGCFLTGAAFSLVMPFLPLYVEQLGVTGHSALNMWSGLVFSITFLFSAIASPFWGGLADRKGRKIMLLRSALGMAIVMLLMGMAQNIWQFLILRALLGLLGGFIPNANALIATQVPRHKSGWALGTLSTGGVSGALLGPLAGGLLADHYGLRPVFFITASVLFICFLLTFFFIRENFLPVSKKEMLHVREVVASLKNPRLVLSLFVTTLIIQVATGSIAPILTLYVRELAGNVSNIAFISGMIASVPGVAALLSAPRLGKLGDRIGPEKILIVALIISVLLLIPMSFVQTPWQLALLRFLLGAADGALLPAVQTLLVYNSTNQIAGRIFSYNQSFRDIGNVTGPLMGAAISASYGFRAVFCVTAGVVLFNAIYSWNSLRRRRLAIE.

The next 11 membrane-spanning stretches (helical) occupy residues 19-39 (LGCF…PLYV), 56-76 (LVFS…GGLA), 90-110 (LGMA…QFLI), 113-133 (ALLG…ATQV), 144-164 (TLST…GLLA), 171-191 (PVFF…FFFI), 222-242 (LFVT…ILTL), 254-274 (IAFI…LSAP), 288-308 (ILIV…FVQT), 317-337 (FLLG…LVYN), and 376-396 (AVFC…WNSL).

This sequence belongs to the major facilitator superfamily. DHA1 family. MdtG (TC 2.A.1.2.20) subfamily.

It is found in the cell inner membrane. The sequence is that of Multidrug resistance protein MdtG from Salmonella agona (strain SL483).